The primary structure comprises 187 residues: Large ribosomal subunit protein eL18B (187 aa).

Threonine 134 carries the post-translational modification Phosphothreonine. Serine 136 bears the Phosphoserine mark.

This sequence belongs to the eukaryotic ribosomal protein eL18 family. In terms of assembly, component of the large ribosomal subunit (LSU). Mature yeast ribosomes consist of a small (40S) and a large (60S) subunit. The 40S small subunit contains 1 molecule of ribosomal RNA (18S rRNA) and at least 33 different proteins. The large 60S subunit contains 3 rRNA molecules (25S, 5.8S and 5S rRNA) and at least 46 different proteins. eL18 interacts with NAP1.

It is found in the cytoplasm. In terms of biological role, component of the ribosome, a large ribonucleoprotein complex responsible for the synthesis of proteins in the cell. The small ribosomal subunit (SSU) binds messenger RNAs (mRNAs) and translates the encoded message by selecting cognate aminoacyl-transfer RNA (tRNA) molecules. The large subunit (LSU) contains the ribosomal catalytic site termed the peptidyl transferase center (PTC), which catalyzes the formation of peptide bonds, thereby polymerizing the amino acids delivered by tRNAs into a polypeptide chain. The nascent polypeptides leave the ribosome through a tunnel in the LSU and interact with protein factors that function in enzymatic processing, targeting, and the membrane insertion of nascent chains at the exit of the ribosomal tunnel. The polypeptide is Large ribosomal subunit protein eL18B (rpl1802) (Schizosaccharomyces pombe (strain 972 / ATCC 24843) (Fission yeast)).